The chain runs to 1024 residues: Beta-galactosidase (1024 aa).

Substrate-binding residues include asparagine 103 and aspartate 202. Aspartate 202 provides a ligand contact to Na(+). Glutamate 417, histidine 419, and glutamate 462 together coordinate Mg(2+). Substrate-binding positions include glutamate 462 and 538 to 541 (EYAH). Catalysis depends on glutamate 462, which acts as the Proton donor. Residue glutamate 538 is the Nucleophile of the active site. Position 598 (asparagine 598) interacts with Mg(2+). 2 residues coordinate Na(+): phenylalanine 602 and asparagine 605. Substrate-binding residues include asparagine 605 and tryptophan 1000.

Belongs to the glycosyl hydrolase 2 family. In terms of assembly, homotetramer. Mg(2+) serves as cofactor. Na(+) is required as a cofactor.

The enzyme catalyses Hydrolysis of terminal non-reducing beta-D-galactose residues in beta-D-galactosides.. This chain is Beta-galactosidase, found in Escherichia coli (strain ATCC 8739 / DSM 1576 / NBRC 3972 / NCIMB 8545 / WDCM 00012 / Crooks).